A 314-amino-acid polypeptide reads, in one-letter code: GTP cyclohydrolase FolE2 (314 aa).

Residues 290–314 (DASAWSAPQASAPDQQESFATGNER) form a disordered region. Positions 291 to 305 (ASAWSAPQASAPDQQ) are enriched in low complexity.

This sequence belongs to the GTP cyclohydrolase IV family.

It catalyses the reaction GTP + H2O = 7,8-dihydroneopterin 3'-triphosphate + formate + H(+). The protein operates within cofactor biosynthesis; 7,8-dihydroneopterin triphosphate biosynthesis; 7,8-dihydroneopterin triphosphate from GTP: step 1/1. Converts GTP to 7,8-dihydroneopterin triphosphate. The sequence is that of GTP cyclohydrolase FolE2 from Pseudomonas putida (strain ATCC 700007 / DSM 6899 / JCM 31910 / BCRC 17059 / LMG 24140 / F1).